The sequence spans 191 residues: Peptide methionine sulfoxide reductase MsrA (191 aa).

Cys-21 is a catalytic residue.

The protein belongs to the MsrA Met sulfoxide reductase family.

It carries out the reaction L-methionyl-[protein] + [thioredoxin]-disulfide + H2O = L-methionyl-(S)-S-oxide-[protein] + [thioredoxin]-dithiol. The catalysed reaction is [thioredoxin]-disulfide + L-methionine + H2O = L-methionine (S)-S-oxide + [thioredoxin]-dithiol. Functionally, has an important function as a repair enzyme for proteins that have been inactivated by oxidation. Catalyzes the reversible oxidation-reduction of methionine sulfoxide in proteins to methionine. In Ralstonia nicotianae (strain ATCC BAA-1114 / GMI1000) (Ralstonia solanacearum), this protein is Peptide methionine sulfoxide reductase MsrA.